Reading from the N-terminus, the 118-residue chain is MRAVYILAMACAATLQASSSALPSTKDLNSQVESLVPSDITDSAHVGGVRLLRVEDKEEETEEERGFGGALADGLKKLNPAKAAKKAKEKAAKIKQDLKEIGEHAAWLEKMRETIGKD.

The first 21 residues, 1 to 21 (MRAVYILAMACAATLQASSSA), serve as a signal peptide directing secretion. The short motif at 50 to 64 (RLLRVEDKEEETEEE) is the RxLR-dEER element.

The protein belongs to the RxLR effector family.

It localises to the secreted. Its subcellular location is the host nucleus. The protein localises to the host cytoplasm. In terms of biological role, effector that enhances P.infestans colonization of Nicotiana benthamiana leaves. This chain is RxLR effector protein PITG_19617, found in Phytophthora infestans (strain T30-4) (Potato late blight agent).